The following is a 231-amino-acid chain: 5'-methylthioadenosine/S-adenosylhomocysteine nucleosidase (231 aa).

The active-site Proton acceptor is Glu-12. Substrate contacts are provided by residues Gly-78, Met-153, and 174 to 175; that span reads ME. The active-site Proton donor is Asp-198.

The protein belongs to the PNP/UDP phosphorylase family. MtnN subfamily.

It catalyses the reaction S-adenosyl-L-homocysteine + H2O = S-(5-deoxy-D-ribos-5-yl)-L-homocysteine + adenine. The enzyme catalyses S-methyl-5'-thioadenosine + H2O = 5-(methylsulfanyl)-D-ribose + adenine. It carries out the reaction 5'-deoxyadenosine + H2O = 5-deoxy-D-ribose + adenine. The protein operates within amino-acid biosynthesis; L-methionine biosynthesis via salvage pathway; S-methyl-5-thio-alpha-D-ribose 1-phosphate from S-methyl-5'-thioadenosine (hydrolase route): step 1/2. In terms of biological role, catalyzes the irreversible cleavage of the glycosidic bond in both 5'-methylthioadenosine (MTA) and S-adenosylhomocysteine (SAH/AdoHcy) to adenine and the corresponding thioribose, 5'-methylthioribose and S-ribosylhomocysteine, respectively. Also cleaves 5'-deoxyadenosine, a toxic by-product of radical S-adenosylmethionine (SAM) enzymes, into 5-deoxyribose and adenine. This Bacillus thuringiensis subsp. konkukian (strain 97-27) protein is 5'-methylthioadenosine/S-adenosylhomocysteine nucleosidase.